The primary structure comprises 290 residues: MKVIVLLLVLAVMQPVIQSQPFPGTGELPMTRRPPKKELEYWCTYAKSCDFCWNCRHGVCKNKVFEKHPLIKKNDYIQICRVSRYNERCSYFTDTRIRRFHIMSCTNPTYYDWFDELMQVKEDRVIDTENIKHTCLCMIATIALIGYIRKQYSRMQLQAATRLLIFLGLYVLLGILMTNIIMNLPLSTDNPMQMRRPPERDLKFWCTYAKHCDFCWTCKDGMCKNKVFSDHPIITQNDYIVNCTVSRWHDRCMYEAHFRIHYQHNMNCSQPKDLEWFIELKRHVINQDDL.

3 helical membrane-spanning segments follow: residues 1–19 (MKVI…VIQS), 128–148 (TENI…IGYI), and 163–183 (LLIF…IIMN). Asparagine 242 and asparagine 267 each carry an N-linked (GlcNAc...) asparagine; by host glycan.

This sequence belongs to the asfivirus MGF 110 family.

It localises to the host membrane. Functionally, plays a role in virus cell tropism, and may be required for efficient virus replication in macrophages. This is Protein MGF 110-9L from Ornithodoros (relapsing fever ticks).